The following is a 97-amino-acid chain: Anti-sigma-YlaC factor YlaD (97 aa).

Zn(2+) contacts are provided by His-29, Cys-33, and Cys-36. Residues 71 to 93 (YYGLLIMKAACWFGAAVAMMLII) form a helical membrane-spanning segment.

The protein belongs to the zinc-associated anti-sigma factor (ZAS) superfamily. It depends on Zn(2+) as a cofactor.

The protein localises to the cell membrane. Its function is as follows. Anti-sigma factor for YlaC. This chain is Anti-sigma-YlaC factor YlaD (ylaD), found in Bacillus subtilis (strain 168).